We begin with the raw amino-acid sequence, 634 residues long: 1-deoxy-D-xylulose-5-phosphate synthase (634 aa).

Residues His-73 and 114–116 each bind thiamine diphosphate; that span reads GHS. Asp-145 provides a ligand contact to Mg(2+). Residues 146–147, Asn-174, Phe-285, and Glu-367 each bind thiamine diphosphate; that span reads GS. Residue Asn-174 coordinates Mg(2+).

Belongs to the transketolase family. DXPS subfamily. Homodimer. The cofactor is Mg(2+). It depends on thiamine diphosphate as a cofactor.

The catalysed reaction is D-glyceraldehyde 3-phosphate + pyruvate + H(+) = 1-deoxy-D-xylulose 5-phosphate + CO2. The protein operates within metabolic intermediate biosynthesis; 1-deoxy-D-xylulose 5-phosphate biosynthesis; 1-deoxy-D-xylulose 5-phosphate from D-glyceraldehyde 3-phosphate and pyruvate: step 1/1. In terms of biological role, catalyzes the acyloin condensation reaction between C atoms 2 and 3 of pyruvate and glyceraldehyde 3-phosphate to yield 1-deoxy-D-xylulose-5-phosphate (DXP). The sequence is that of 1-deoxy-D-xylulose-5-phosphate synthase from Syntrophotalea carbinolica (strain DSM 2380 / NBRC 103641 / GraBd1) (Pelobacter carbinolicus).